The following is a 589-amino-acid chain: LRR receptor-like serine/threonine-protein kinase FEI 2 (589 aa).

The N-terminal stretch at 1–28 (MGICLMKRCCSWFLLISFLSALTNENEA) is a signal peptide. The Extracellular segment spans residues 29–236 (ISPDGEALLS…TGQGGNNPKR (208 aa)). 5 LRR repeats span residues 72–96 (TKRV…LGKL), 97–120 (DQLR…LGNC), 122–144 (ALEG…IGNL), 145–168 (SGLK…LGQL), and 170–193 (RLTK…LLAR). Asn-119 and Asn-143 each carry an N-linked (GlcNAc...) asparagine glycan. N-linked (GlcNAc...) asparagine glycosylation is found at Asn-175, Asn-215, and Asn-219. The helical transmembrane segment at 237–257 (LLISASATVGGLLLVALMCFW) threads the bilayer. Residues 258–589 (GCFLYKKLGR…PSDFYDSSSD (332 aa)) lie on the Cytoplasmic side of the membrane. Residues 304–576 (LNEEHIIGCG…VVQLLESEVM (273 aa)) enclose the Protein kinase domain. Residues 310–318 (IGCGGFGTV) and Lys-332 contribute to the ATP site. The residue at position 384 (Ser-384) is a Phosphoserine. Asp-427 functions as the Proton acceptor in the catalytic mechanism. Residues Thr-460, Thr-461, and Thr-466 each carry the phosphothreonine modification. At Tyr-474 the chain carries Phosphotyrosine.

Belongs to the protein kinase superfamily. Ser/Thr protein kinase family. In terms of assembly, interacts with the ACC synthases ACS5 and ACS9 but not ACS2, via the kinase domain. Post-translationally, autophosphorylated. As to expression, expressed in the root meristem and elongation zone, and in hypocotyls of etiolated seedlings.

The protein resides in the cell membrane. The catalysed reaction is L-seryl-[protein] + ATP = O-phospho-L-seryl-[protein] + ADP + H(+). It carries out the reaction L-threonyl-[protein] + ATP = O-phospho-L-threonyl-[protein] + ADP + H(+). Involved in the signaling pathway that regulates cell wall function, including cellulose biosynthesis, likely via an 1-aminocyclopropane-1-carboxylic acid (ACC)-mediated signal (a precursor of ethylene). The chain is LRR receptor-like serine/threonine-protein kinase FEI 2 (FEI2) from Arabidopsis thaliana (Mouse-ear cress).